The sequence spans 701 residues: Elongation factor G (701 aa).

In terms of domain architecture, tr-type G spans 8–291 (SRYRNIGIVA…AVIDYLPAPI (284 aa)). GTP is bound by residues 17 to 24 (AHVDAGKT), 89 to 93 (DTPGH), and 143 to 146 (NKMD).

This sequence belongs to the TRAFAC class translation factor GTPase superfamily. Classic translation factor GTPase family. EF-G/EF-2 subfamily.

The protein localises to the cytoplasm. Its function is as follows. Catalyzes the GTP-dependent ribosomal translocation step during translation elongation. During this step, the ribosome changes from the pre-translocational (PRE) to the post-translocational (POST) state as the newly formed A-site-bound peptidyl-tRNA and P-site-bound deacylated tRNA move to the P and E sites, respectively. Catalyzes the coordinated movement of the two tRNA molecules, the mRNA and conformational changes in the ribosome. The sequence is that of Elongation factor G from Pseudomonas syringae pv. tomato (strain ATCC BAA-871 / DC3000).